A 150-amino-acid chain; its full sequence is Single-stranded DNA-binding protein rim1, mitochondrial (150 aa).

A mitochondrion-targeting transit peptide spans M1 to Y22. The SSB domain occupies I25–P125. Positions N127–F150 are disordered. The span at K128–L141 shows a compositional bias: basic and acidic residues.

The protein resides in the mitochondrion. In terms of biological role, this protein binds preferentially and cooperatively to ss-DNA. Involved in mitochondrial DNA replication. This chain is Single-stranded DNA-binding protein rim1, mitochondrial (rim1), found in Schizosaccharomyces pombe (strain 972 / ATCC 24843) (Fission yeast).